The chain runs to 78 residues: Protein SlyX homolog (78 aa).

The protein belongs to the SlyX family.

The protein is Protein SlyX homolog of Xylella fastidiosa (strain M23).